Consider the following 93-residue polypeptide: MSRSIKKGPFVKESLLNKIVEMNKAGDKKVVKTWSRSSTIFPEMIGHTIAVHDGRKHVPVYISEDMVGHKLGEFVLTRTFRGHGNTEKTTSVK.

It belongs to the universal ribosomal protein uS19 family.

In terms of biological role, protein S19 forms a complex with S13 that binds strongly to the 16S ribosomal RNA. In Clostridium acetobutylicum (strain ATCC 824 / DSM 792 / JCM 1419 / IAM 19013 / LMG 5710 / NBRC 13948 / NRRL B-527 / VKM B-1787 / 2291 / W), this protein is Small ribosomal subunit protein uS19.